The following is a 343-amino-acid chain: Ribosomal RNA small subunit methyltransferase C (343 aa).

This sequence belongs to the methyltransferase superfamily. RsmC family. Monomer.

The protein localises to the cytoplasm. It catalyses the reaction guanosine(1207) in 16S rRNA + S-adenosyl-L-methionine = N(2)-methylguanosine(1207) in 16S rRNA + S-adenosyl-L-homocysteine + H(+). Specifically methylates the guanine in position 1207 of 16S rRNA in the 30S particle. The chain is Ribosomal RNA small subunit methyltransferase C from Escherichia coli O1:K1 / APEC.